A 290-amino-acid polypeptide reads, in one-letter code: ATP synthase gamma chain (290 aa).

It belongs to the ATPase gamma chain family. As to quaternary structure, F-type ATPases have 2 components, CF(1) - the catalytic core - and CF(0) - the membrane proton channel. CF(1) has five subunits: alpha(3), beta(3), gamma(1), delta(1), epsilon(1). CF(0) has three main subunits: a, b and c.

Its subcellular location is the cell inner membrane. Produces ATP from ADP in the presence of a proton gradient across the membrane. The gamma chain is believed to be important in regulating ATPase activity and the flow of protons through the CF(0) complex. The sequence is that of ATP synthase gamma chain from Anaeromyxobacter dehalogenans (strain 2CP-1 / ATCC BAA-258).